The sequence spans 84 residues: Sec-independent protein translocase protein TatA (84 aa).

A helical transmembrane segment spans residues 1-21 (MPNLGVPELLIIALVIFLLFG). The segment covering 42 to 57 (EMDEMKTDGDKKELAE) has biased composition (basic and acidic residues). The segment at 42-84 (EMDEMKTDGDKKELAEKQAPTAEQQQAQDLAQPKSEQPNEHNA) is disordered. Residues 62–77 (TAEQQQAQDLAQPKSE) show a composition bias toward polar residues.

This sequence belongs to the TatA/E family. In terms of assembly, the Tat system comprises two distinct complexes: a TatABC complex, containing multiple copies of TatA, TatB and TatC subunits, and a separate TatA complex, containing only TatA subunits. Substrates initially bind to the TatABC complex, which probably triggers association of the separate TatA complex to form the active translocon.

It localises to the cell membrane. Its function is as follows. Part of the twin-arginine translocation (Tat) system that transports large folded proteins containing a characteristic twin-arginine motif in their signal peptide across membranes. TatA could form the protein-conducting channel of the Tat system. In Corynebacterium jeikeium (strain K411), this protein is Sec-independent protein translocase protein TatA.